The sequence spans 372 residues: Cytochrome b (372 aa).

Transmembrane regions (helical) follow at residues 25 to 45, 69 to 90, 105 to 125, and 170 to 190; these read FGSM…FLAI, WIMQ…YIHI, WLSG…GYVL, and FFAL…IHII. Heme b contacts are provided by histidine 75 and histidine 89. Heme b is bound by residues histidine 174 and histidine 188. Position 193 (histidine 193) interacts with a ubiquinone. The next 4 helical transmembrane spans lie at 218 to 238, 280 to 300, 312 to 332, and 339 to 358; these read YKDM…LSFL, LGGT…PFTH, LSQT…WTAT, and FITI…IMTP.

The protein belongs to the cytochrome b family. In terms of assembly, the cytochrome bc1 complex contains 3 respiratory subunits (MT-CYB, CYC1 and UQCRFS1), 2 core proteins (UQCRC1 and UQCRC2) and probably 6 low-molecular weight proteins. Requires heme b as cofactor.

The protein resides in the mitochondrion inner membrane. In terms of biological role, component of the ubiquinol-cytochrome c reductase complex (complex III or cytochrome b-c1 complex) that is part of the mitochondrial respiratory chain. The b-c1 complex mediates electron transfer from ubiquinol to cytochrome c. Contributes to the generation of a proton gradient across the mitochondrial membrane that is then used for ATP synthesis. This is Cytochrome b (MT-CYB) from Aspidelaps scutatus (Shield-nose snake).